A 200-amino-acid polypeptide reads, in one-letter code: Large ribosomal subunit protein uL4 (200 aa).

Positions 38-68 (GRQGSKQQKTRSDVRGGGKRPWRQKGTGRAR) are disordered. The span at 54 to 65 (GGKRPWRQKGTG) shows a compositional bias: basic residues.

The protein belongs to the universal ribosomal protein uL4 family. Part of the 50S ribosomal subunit.

Functionally, one of the primary rRNA binding proteins, this protein initially binds near the 5'-end of the 23S rRNA. It is important during the early stages of 50S assembly. It makes multiple contacts with different domains of the 23S rRNA in the assembled 50S subunit and ribosome. In terms of biological role, forms part of the polypeptide exit tunnel. The chain is Large ribosomal subunit protein uL4 from Pseudomonas fluorescens (strain SBW25).